Consider the following 391-residue polypeptide: Histidinol-phosphate aminotransferase (391 aa).

K246 bears the N6-(pyridoxal phosphate)lysine mark.

This sequence belongs to the class-II pyridoxal-phosphate-dependent aminotransferase family. Histidinol-phosphate aminotransferase subfamily. Requires pyridoxal 5'-phosphate as cofactor.

The catalysed reaction is L-histidinol phosphate + 2-oxoglutarate = 3-(imidazol-4-yl)-2-oxopropyl phosphate + L-glutamate. Its pathway is amino-acid biosynthesis; L-histidine biosynthesis; L-histidine from 5-phospho-alpha-D-ribose 1-diphosphate: step 7/9. This chain is Histidinol-phosphate aminotransferase, found in Methanopyrus kandleri (strain AV19 / DSM 6324 / JCM 9639 / NBRC 100938).